A 604-amino-acid chain; its full sequence is Threonine--tRNA ligase (604 aa).

The interval 209 to 500 (DHRKLGQEMG…LTEHFGGEFP (292 aa)) is catalytic. Positions 301, 352, and 477 each coordinate Zn(2+).

The protein belongs to the class-II aminoacyl-tRNA synthetase family. Homodimer. Zn(2+) is required as a cofactor.

Its subcellular location is the cytoplasm. The enzyme catalyses tRNA(Thr) + L-threonine + ATP = L-threonyl-tRNA(Thr) + AMP + diphosphate + H(+). Catalyzes the attachment of threonine to tRNA(Thr) in a two-step reaction: L-threonine is first activated by ATP to form Thr-AMP and then transferred to the acceptor end of tRNA(Thr). Also edits incorrectly charged L-seryl-tRNA(Thr). This is Threonine--tRNA ligase from Helicobacter hepaticus (strain ATCC 51449 / 3B1).